We begin with the raw amino-acid sequence, 412 residues long: uncharacterized protein (412 aa).

H49 serves as a coordination point for Zn(2+). The active-site Proton acceptor is the E52. Zn(2+)-binding residues include H53 and E129.

This sequence belongs to the peptidase M16 family. Zn(2+) serves as cofactor.

This is an uncharacterized protein from Rickettsia bellii (strain RML369-C).